The chain runs to 191 residues: Calcium-activated potassium channel subunit beta-1 (191 aa).

Topologically, residues 1–18 are cytoplasmic; that stretch reads MVKKLVMAQKRGETRALC. A helical membrane pass occupies residues 19–39; it reads LGVTMVVCAVITYYILVTTVL. Residues 40–157 are Extracellular-facing; the sequence is PLYQKSVWTQ…FQRLYGPQAL (118 aa). 2 N-linked (GlcNAc...) asparagine glycosylation sites follow: asparagine 80 and asparagine 142. A helical transmembrane segment spans residues 158–178; sequence LFSLFWPTFLLTGGLLIIAMV. Over 179-191 the chain is Cytoplasmic; the sequence is KSNQYLSILAAQK.

This sequence belongs to the KCNMB (TC 8.A.14.1) family. KCNMB1 subfamily. In terms of assembly, interacts with KCNMA1 tetramer. There are probably 4 molecules of KCMNB1 per KCNMA1 tetramer. In terms of processing, N-glycosylated. In terms of tissue distribution, abundantly expressed in smooth muscle. Low levels of expression in most other tissues. Within the brain, relatively high levels found in hippocampus and corpus callosum.

The protein resides in the membrane. Regulatory subunit of the calcium activated potassium KCNMA1 (maxiK) channel. Modulates the calcium sensitivity and gating kinetics of KCNMA1, thereby contributing to KCNMA1 channel diversity. Increases the apparent Ca(2+)/voltage sensitivity of the KCNMA1 channel. It also modifies KCNMA1 channel kinetics and alters its pharmacological properties. It slows down the activation and the deactivation kinetics of the channel. Acts as a negative regulator of smooth muscle contraction by enhancing the calcium sensitivity to KCNMA1. Its presence is also a requirement for internal binding of the KCNMA1 channel opener dehydrosoyasaponin I (DHS-1) triterpene glycoside and for external binding of the agonist hormone 17-beta-estradiol (E2). Increases the binding activity of charybdotoxin (CTX) toxin to KCNMA1 peptide blocker by increasing the CTX association rate and decreasing the dissociation rate. In Homo sapiens (Human), this protein is Calcium-activated potassium channel subunit beta-1 (KCNMB1).